A 65-amino-acid chain; its full sequence is Large ribosomal subunit protein bL35 (65 aa).

This sequence belongs to the bacterial ribosomal protein bL35 family.

The sequence is that of Large ribosomal subunit protein bL35 from Porphyromonas gingivalis (strain ATCC 33277 / DSM 20709 / CIP 103683 / JCM 12257 / NCTC 11834 / 2561).